Reading from the N-terminus, the 189-residue chain is GTP cyclohydrolase 1 (189 aa).

Residues Cys78, His81, and Cys150 each coordinate Zn(2+).

The protein belongs to the GTP cyclohydrolase I family. As to quaternary structure, toroid-shaped homodecamer, composed of two pentamers of five dimers.

The catalysed reaction is GTP + H2O = 7,8-dihydroneopterin 3'-triphosphate + formate + H(+). Its pathway is cofactor biosynthesis; 7,8-dihydroneopterin triphosphate biosynthesis; 7,8-dihydroneopterin triphosphate from GTP: step 1/1. This is GTP cyclohydrolase 1 from Listeria welshimeri serovar 6b (strain ATCC 35897 / DSM 20650 / CCUG 15529 / CIP 8149 / NCTC 11857 / SLCC 5334 / V8).